A 78-amino-acid polypeptide reads, in one-letter code: Small ribosomal subunit protein bS16c (78 aa).

It belongs to the bacterial ribosomal protein bS16 family.

The protein resides in the plastid. The protein localises to the chloroplast. This is Small ribosomal subunit protein bS16c from Gracilaria tenuistipitata var. liui (Red alga).